Here is a 326-residue protein sequence, read N- to C-terminus: Acetyl-coenzyme A carboxylase carboxyl transferase subunit beta (326 aa).

The CoA carboxyltransferase N-terminal domain maps to 32-301; that stretch reads LWTKCPACGV…ILPPLNADSN (270 aa). Residues Cys-36, Cys-39, Cys-55, and Cys-58 each contribute to the Zn(2+) site. Residues 36–58 form a C4-type zinc finger; the sequence is CPACGVLTYTKDLQGNWMVCVEC.

Belongs to the AccD/PCCB family. As to quaternary structure, acetyl-CoA carboxylase is a heterohexamer composed of biotin carboxyl carrier protein (AccB), biotin carboxylase (AccC) and two subunits each of ACCase subunit alpha (AccA) and ACCase subunit beta (AccD). It depends on Zn(2+) as a cofactor.

The protein localises to the cytoplasm. It catalyses the reaction N(6)-carboxybiotinyl-L-lysyl-[protein] + acetyl-CoA = N(6)-biotinyl-L-lysyl-[protein] + malonyl-CoA. It participates in lipid metabolism; malonyl-CoA biosynthesis; malonyl-CoA from acetyl-CoA: step 1/1. Functionally, component of the acetyl coenzyme A carboxylase (ACC) complex. Biotin carboxylase (BC) catalyzes the carboxylation of biotin on its carrier protein (BCCP) and then the CO(2) group is transferred by the transcarboxylase to acetyl-CoA to form malonyl-CoA. The protein is Acetyl-coenzyme A carboxylase carboxyl transferase subunit beta of Synechocystis sp. (strain ATCC 27184 / PCC 6803 / Kazusa).